Here is a 280-residue protein sequence, read N- to C-terminus: Para-Rep C2 (280 aa).

A CRESS-DNA virus Rep endonuclease domain is found at 1-97 (MARRYCFTLN…ETLISEIGIP (97 aa)). The RCR-1 motif lies at 6-9 (CFTL). Positions 37 and 45 each coordinate a divalent metal cation. Positions 45-47 (HLQ) match the RCR-2 motif. A Nuclear localization signal motif is present at residues 54 to 75 (NKIRLGGLKKKFGNRAHWEIAR). The active-site For DNA cleavage activity is the Tyr84. The short motif at 84-87 (YCCK) is the RCR-3 element. The short motif at 97-103 (PVMKGSN) is the Nuclear localization signal element. 172–180 (GSDGGEGKT) contacts ATP.

The protein belongs to the nanoviridea/circoviridae replication-associated protein family. Homooligomer (Potential). Rep binds to repeated DNA motifs (iterons). Mg(2+) serves as cofactor. The cofactor is Mn(2+).

Its subcellular location is the host nucleus. It carries out the reaction ATP + H2O = ADP + phosphate + H(+). Functionally, initiates and terminates the replication only of its own subviral DNA molecule. The closed circular ssDNA genome is first converted to a superhelical dsDNA. Rep binds a specific hairpin at the genome origin of replication. Introduces an endonucleolytic nick within the intergenic region of the genome, thereby initiating the rolling circle replication (RCR). Following cleavage, binds covalently to the 5'-phosphate of DNA as a tyrosyl ester. The cleavage gives rise to a free 3'-OH that serves as a primer for the cellular DNA polymerase. The polymerase synthesizes the (+) strand DNA by rolling circle mechanism. After one round of replication, a Rep-catalyzed nucleotidyl transfer reaction releases a circular single-stranded virus genome, thereby terminating the replication. Displays origin-specific DNA cleavage, nucleotidyl transferase, ATPase and helicase activities. This Subterranean clover stunt C2 alphasatellite (SCSC2A) protein is Para-Rep C2 (C2).